The primary structure comprises 411 residues: Mannan endo-1,4-beta-mannosidase 1 (411 aa).

A signal peptide spans 1 to 17 (MLNILPFFLFFLPFLIG). Residue asparagine 33 is glycosylated (N-linked (GlcNAc...) asparagine). Residues tryptophan 87 and asparagine 197 each coordinate substrate. The active-site Proton donor is glutamate 198. Asparagine 202 is a glycosylation site (N-linked (GlcNAc...) asparagine). Substrate is bound at residue tyrosine 277. The active-site Nucleophile is the glutamate 319. Tryptophan 361 is a substrate binding site. 2 N-linked (GlcNAc...) asparagine glycosylation sites follow: asparagine 366 and asparagine 384.

This sequence belongs to the glycosyl hydrolase 5 (cellulase A) family. Expressed in roots, stems and flowers.

The protein localises to the secreted. The enzyme catalyses Random hydrolysis of (1-&gt;4)-beta-D-mannosidic linkages in mannans, galactomannans and glucomannans.. The protein is Mannan endo-1,4-beta-mannosidase 1 (MAN1) of Arabidopsis thaliana (Mouse-ear cress).